Here is a 212-residue protein sequence, read N- to C-terminus: uncharacterized protein (212 aa).

The disordered stretch occupies residues 97 to 151 (SDASEAKNDDRRSDGRFALYSVSDTPETTTASRSADRSTNPKTAKHPKSAAKPTV). Over residues 100-111 (SEAKNDDRRSDG) the composition is skewed to basic and acidic residues.

This is an uncharacterized protein from Mycobacterium tuberculosis (strain CDC 1551 / Oshkosh).